The primary structure comprises 203 residues: ATP-dependent Clp protease proteolytic subunit (203 aa).

The active-site Nucleophile is the Ser107. His132 is an active-site residue.

This sequence belongs to the peptidase S14 family. In terms of assembly, fourteen ClpP subunits assemble into 2 heptameric rings which stack back to back to give a disk-like structure with a central cavity, resembling the structure of eukaryotic proteasomes.

The protein resides in the cytoplasm. It catalyses the reaction Hydrolysis of proteins to small peptides in the presence of ATP and magnesium. alpha-casein is the usual test substrate. In the absence of ATP, only oligopeptides shorter than five residues are hydrolyzed (such as succinyl-Leu-Tyr-|-NHMec, and Leu-Tyr-Leu-|-Tyr-Trp, in which cleavage of the -Tyr-|-Leu- and -Tyr-|-Trp bonds also occurs).. In terms of biological role, cleaves peptides in various proteins in a process that requires ATP hydrolysis. Has a chymotrypsin-like activity. Plays a major role in the degradation of misfolded proteins. The chain is ATP-dependent Clp protease proteolytic subunit from Shewanella piezotolerans (strain WP3 / JCM 13877).